A 347-amino-acid polypeptide reads, in one-letter code: NADH-ubiquinone oxidoreductase chain 2 (347 aa).

Helical transmembrane passes span 3 to 23, 59 to 79, 93 to 115, 150 to 170, 178 to 198, 200 to 220, 240 to 260, 274 to 294, and 326 to 346; these read PLAL…TMMS, YFMT…INLM, VASN…HFWV, NTNL…WGGL, ILAY…PFNP, LTLL…MILA, MTIM…LSGF, NSII…YFYT, and LPTL…ISML.

This sequence belongs to the complex I subunit 2 family. As to quaternary structure, core subunit of respiratory chain NADH dehydrogenase (Complex I) which is composed of 45 different subunits. Interacts with TMEM242.

The protein resides in the mitochondrion inner membrane. It carries out the reaction a ubiquinone + NADH + 5 H(+)(in) = a ubiquinol + NAD(+) + 4 H(+)(out). Functionally, core subunit of the mitochondrial membrane respiratory chain NADH dehydrogenase (Complex I) which catalyzes electron transfer from NADH through the respiratory chain, using ubiquinone as an electron acceptor. Essential for the catalytic activity and assembly of complex I. This chain is NADH-ubiquinone oxidoreductase chain 2, found in Elephas maximus (Indian elephant).